A 291-amino-acid polypeptide reads, in one-letter code: Shikimate dehydrogenase (NADP(+)) (291 aa).

Residues 14 to 16 (SKS) and Thr61 contribute to the shikimate site. The active-site Proton acceptor is Lys65. Glu77 contacts NADP(+). Residues Asn86 and Asp102 each contribute to the shikimate site. Residues 139–143 (GAGGA), 164–169 (NRTFSR), and Leu232 contribute to the NADP(+) site. Tyr234 is a shikimate binding site. Position 256 (Gly256) interacts with NADP(+).

This sequence belongs to the shikimate dehydrogenase family. As to quaternary structure, homodimer.

The catalysed reaction is shikimate + NADP(+) = 3-dehydroshikimate + NADPH + H(+). It participates in metabolic intermediate biosynthesis; chorismate biosynthesis; chorismate from D-erythrose 4-phosphate and phosphoenolpyruvate: step 4/7. In terms of biological role, involved in the biosynthesis of the chorismate, which leads to the biosynthesis of aromatic amino acids. Catalyzes the reversible NADPH linked reduction of 3-dehydroshikimate (DHSA) to yield shikimate (SA). This Blochmanniella pennsylvanica (strain BPEN) protein is Shikimate dehydrogenase (NADP(+)).